The primary structure comprises 318 residues: uncharacterized protein (318 aa).

The stretch at 67–157 (LAFDELEKEK…SLKAIQTSQE (91 aa)) forms a coiled coil. The segment at 172-318 (ESTNKVEKNA…KGFFARLFNL (147 aa)) is disordered. 2 stretches are compositionally biased toward basic and acidic residues: residues 175 to 193 (NKVEKNAVTEDKADSKDSK) and 219 to 236 (KVDKEDQISATEAIEKAS). Over residues 237–248 (VEQSKNENAAET) the composition is skewed to polar residues. 2 stretches are compositionally biased toward basic and acidic residues: residues 249 to 274 (SNKEATVDADAQHDAEQQVAEAHAEA) and 300 to 310 (SEPKPQEEKKG).

This is an uncharacterized protein from Staphylococcus aureus (strain Mu50 / ATCC 700699).